Here is a 939-residue protein sequence, read N- to C-terminus: Zinc finger RNA-binding protein 2 (939 aa).

Disordered regions lie at residues 1–72 (MATS…AYGS), 116–185 (GRMT…IVTS), 217–264 (FYPP…PKAG), 289–314 (HLGG…SPRG), 360–389 (LEPA…ASSR), 401–449 (ALCE…DAQP), 545–590 (RLEE…SSDD), and 906–939 (RLGA…EGLV). Polar residues-rich tracts occupy residues 137 to 147 (PHGSHSHAQPP) and 157 to 184 (QPAS…SIVT). The span at 217-239 (FYPPAQPPPPPGPPQQLPPPPAP) shows a compositional bias: pro residues. Positions 516–549 (KVLEERMRKQRHLAEERLEQLRRWHAERRRLEEE) form a coiled coil. Residues 570–935 (RPESPASAPL…GEKKRGRRGG (366 aa)) enclose the DZF domain. Residues 906 to 916 (RLGARFRKRQR) show a composition bias toward basic residues.

In Homo sapiens (Human), this protein is Zinc finger RNA-binding protein 2 (ZFR2).